We begin with the raw amino-acid sequence, 571 residues long: Plastidial pyruvate kinase 3, chloroplastic (571 aa).

Residues 1–55 constitute a chloroplast transit peptide; sequence MAAYGQISSGMTVDPQVLSSSRNIGVSLSPLRRTLIGAGVRSTSISLRQCSLSVR. Residue Arg129 participates in substrate binding. Positions 131, 133, 164, and 165 each coordinate K(+). 131–134 lines the ATP pocket; it reads NMSH. Residue Arg171 coordinates ATP. Lys314 contacts substrate. Glu316 is a binding site for Mg(2+). Residues Gly339, Asp340, and Thr372 each contribute to the substrate site. Asp340 contributes to the Mg(2+) binding site.

It belongs to the pyruvate kinase family. As to quaternary structure, oligomer of alpha and beta subunits. It depends on Mg(2+) as a cofactor. The cofactor is K(+). Expressed at low levels in roots, leaves, inflorescences, siliques, pollen, seeds and flowers.

It is found in the plastid. Its subcellular location is the chloroplast stroma. It carries out the reaction pyruvate + ATP = phosphoenolpyruvate + ADP + H(+). Its pathway is carbohydrate degradation; glycolysis; pyruvate from D-glyceraldehyde 3-phosphate: step 5/5. In terms of biological role, required for plastidial pyruvate kinase activity. The chain is Plastidial pyruvate kinase 3, chloroplastic (PKP3) from Arabidopsis thaliana (Mouse-ear cress).